The chain runs to 965 residues: Calsyntenin-2 (965 aa).

The signal sequence occupies residues 1–20 (MLPGRLCLVPLLLALGVGSG). Over 21–835 (GGSGDGGDSR…SIQRSSVVPS (815 aa)) the chain is Extracellular. 2 Cadherin domains span residues 46–162 (IETS…APTF) and 163–282 (KEPA…MPLF). N-linked (GlcNAc...) asparagine glycans are attached at residues N58 and N100. N344, N376, N720, and N733 each carry an N-linked (GlcNAc...) asparagine glycan. A helical transmembrane segment spans residues 836–856 (IATVVIIISVCMLVFVVAMGV). Residues 857–965 (YRVRIAHQHF…NTAGVINIWK (109 aa)) lie on the Cytoplasmic side of the membrane. Positions 891-965 (PMEKHEGPGH…NTAGVINIWK (75 aa)) are disordered. The segment covering 892–902 (MEKHEGPGHGE) has biased composition (basic and acidic residues). The span at 903–915 (DETEGEEEEEAEE) shows a compositional bias: acidic residues. A compositionally biased stretch (polar residues) spans 942-959 (QSGTSSQRPERSTWNTAG).

Belongs to the calsyntenin family. Post-translationally, proteolytically processed under normal cellular conditions. A primary zeta-cleavage generates a large extracellular (soluble) N-terminal domain (sAlc) and a short C-terminal transmembrane fragment (CTF1). A secondary cleavage catalyzed by gamma-secretase within the transmembrane domain releases the beta-Alc-gamma chain in the extracellular milieu and produces an intracellular fragment (AlcICD). This processing is strongly suppressed in the tripartite complex formed with APBA2 and APP, which seems to prevent the association with PSEN1.

It localises to the postsynaptic cell membrane. Its subcellular location is the endoplasmic reticulum membrane. It is found in the golgi apparatus membrane. The protein localises to the cell projection. The protein resides in the dendrite. Its function is as follows. Postsynaptic adhesion molecule that binds to presynaptic neurexins to mediate synapse formation, and which is involved in learning and memory. Promotes synapse development by acting as a cell adhesion molecule at the postsynaptic membrane, which associates with neurexin-alpha at the presynaptic membrane. The chain is Calsyntenin-2 from Rattus norvegicus (Rat).